The chain runs to 265 residues: Ubiquinone biosynthesis protein COQ4 homolog, mitochondrial (265 aa).

A mitochondrion-targeting transit peptide spans 1–30; the sequence is MATLLRPVLRRLCGLPGLQRPAAEMPLRAR. At Ser-108 the chain carries Phosphoserine. Residues His-163, Asp-164, His-167, and Glu-179 each contribute to the Zn(2+) site.

It belongs to the COQ4 family. As to quaternary structure, component of a multi-subunit COQ enzyme complex, composed of at least COQ3, COQ4, COQ5, COQ6, COQ7 and COQ9. Requires Zn(2+) as cofactor. Expressed ubiquitously, but at high levels in liver, lung and pancreas.

It is found in the mitochondrion inner membrane. It carries out the reaction 4-hydroxy-3-methoxy-5-(all-trans-decaprenyl)benzoate + H(+) = 2-methoxy-6-(all-trans-decaprenyl)phenol + CO2. Its pathway is cofactor biosynthesis; ubiquinone biosynthesis. Lyase that catalyzes the C1-decarboxylation of 4-hydroxy-3-methoxy-5-(all-trans-decaprenyl)benzoic acid into 2-methoxy-6-(all-trans-decaprenyl)phenol during ubiquinone biosynthesis. This Homo sapiens (Human) protein is Ubiquinone biosynthesis protein COQ4 homolog, mitochondrial.